The sequence spans 647 residues: MPKIIELPEVLANQIAAGEVVERPASVVKELVENAIDAGSTQITIEVEESGLSKIQITDNGEGMAQADVAMSLRRHATSKIKNQGDLFRIRTLGFRGEALPSIASISHLTIVTAADGEVYGTKLVAKGGEIESQDPISTPVGTKITVENLFYNTPARLKYMKSLQAELAHIVDVVNRLSLAHPEVAFTLLNDGRQLTQTSGTGDLRQAIAGIYGLTTAKKMVEISNSDLDFEVSGYVSLPELTRANRNYITILINGRYIKNFLLNRAIFDGYGSKLMVGRFPIAVIDIQIDPYLADVNVHPTKQEVRISKEKELMALIKSAIAQSLREQDLIPDALENLAKSSTRGATRSVQTSLPLKQTNLYYDSSRNDFFVTPETVQEDIKPLVSKSESSVSSVANKQQPTVKQAKRSADDSDSEHGKLDYKNKSKLKRMLENLTNEETSTFPELEFFGQMHGTYLFAQGQGGLYIIDQHAAQERVKYEYYREKIGVVDSSLQQLLVPYLFEFSGSDYISLQEKMPLLNQVCIYLEPYGNNTFILREHPIWMKEEEIESAVYEMCDMLLLTNEVSVKTYRAELAIMMSCKRSIKANHALDDYSARDLLVQLAQCKNPYNCPHGRPVLVNFTKSDMEKMFRRIQENHTSLRDLGKY.

The disordered stretch occupies residues 389–423 (SESSVSSVANKQQPTVKQAKRSADDSDSEHGKLDY). Residues 409-423 (RSADDSDSEHGKLDY) are compositionally biased toward basic and acidic residues.

Belongs to the DNA mismatch repair MutL/HexB family.

This protein is involved in the repair of mismatches in DNA. It is required for dam-dependent methyl-directed DNA mismatch repair. May act as a 'molecular matchmaker', a protein that promotes the formation of a stable complex between two or more DNA-binding proteins in an ATP-dependent manner without itself being part of a final effector complex. The chain is DNA mismatch repair protein MutL from Streptococcus thermophilus (strain ATCC BAA-491 / LMD-9).